Reading from the N-terminus, the 316-residue chain is Beta-ketoacyl-[acyl-carrier-protein] synthase III (316 aa).

Active-site residues include Cys112 and His243. The interval 244–248 is ACP-binding; sequence QANLR. Asn273 is a catalytic residue.

Belongs to the thiolase-like superfamily. FabH family. As to quaternary structure, homodimer.

It localises to the cytoplasm. It catalyses the reaction malonyl-[ACP] + acetyl-CoA + H(+) = 3-oxobutanoyl-[ACP] + CO2 + CoA. It functions in the pathway lipid metabolism; fatty acid biosynthesis. In terms of biological role, catalyzes the condensation reaction of fatty acid synthesis by the addition to an acyl acceptor of two carbons from malonyl-ACP. Catalyzes the first condensation reaction which initiates fatty acid synthesis and may therefore play a role in governing the total rate of fatty acid production. Possesses both acetoacetyl-ACP synthase and acetyl transacylase activities. Its substrate specificity determines the biosynthesis of branched-chain and/or straight-chain of fatty acids. The sequence is that of Beta-ketoacyl-[acyl-carrier-protein] synthase III from Haemophilus influenzae (strain 86-028NP).